The primary structure comprises 295 residues: Thioredoxin-related transmembrane protein 2 (295 aa).

Positions methionine 1–glycine 48 are cleaved as a signal peptide. Residues leucine 49–alanine 102 lie on the Extracellular side of the membrane. The helical transmembrane segment at isoleucine 103–methionine 125 threads the bilayer. The Thioredoxin domain occupies leucine 114–lysine 269. The Cytoplasmic segment spans residues threonine 126 to lysine 295. 2 positions are modified to phosphoserine: serine 211 and serine 243. The tract at residues lysine 266–lysine 295 is disordered. Basic and acidic residues predominate over residues lysine 269 to valine 279. The Di-lysine motif signature appears at lysine 292 to lysine 295.

In terms of assembly, monomer. Homodimer; disulfide-linked. Occurs in both reduced and oxidized monomeric form. Oxidative conditions increase homodimerization. Interacts with CANX. Interacts with ATP2A2.

It is found in the endoplasmic reticulum membrane. It localises to the mitochondrion membrane. Endoplasmic reticulum and mitochondria-associated protein that probably functions as a regulator of cellular redox state and thereby regulates protein post-translational modification, protein folding and mitochondrial activity. Indirectly regulates neuronal proliferation, migration, and organization in the developing brain. The polypeptide is Thioredoxin-related transmembrane protein 2 (Tmx2) (Mus musculus (Mouse)).